We begin with the raw amino-acid sequence, 179 residues long: Peptide deformylase (179 aa).

Fe cation-binding residues include Cys-102 and His-144. The active site involves Glu-145. Position 148 (His-148) interacts with Fe cation.

The protein belongs to the polypeptide deformylase family. It depends on Fe(2+) as a cofactor.

It carries out the reaction N-terminal N-formyl-L-methionyl-[peptide] + H2O = N-terminal L-methionyl-[peptide] + formate. Removes the formyl group from the N-terminal Met of newly synthesized proteins. Requires at least a dipeptide for an efficient rate of reaction. N-terminal L-methionine is a prerequisite for activity but the enzyme has broad specificity at other positions. This chain is Peptide deformylase, found in Wolbachia pipientis wMel.